The primary structure comprises 316 residues: Aspartate carbamoyltransferase catalytic subunit (316 aa).

Residues Arg-58 and Thr-59 each contribute to the carbamoyl phosphate site. Lys-86 contributes to the L-aspartate binding site. Arg-108, His-136, and Gln-139 together coordinate carbamoyl phosphate. Residues Arg-169 and Arg-223 each coordinate L-aspartate. Positions 264 and 265 each coordinate carbamoyl phosphate.

Belongs to the aspartate/ornithine carbamoyltransferase superfamily. ATCase family. As to quaternary structure, heterododecamer (2C3:3R2) of six catalytic PyrB chains organized as two trimers (C3), and six regulatory PyrI chains organized as three dimers (R2).

The catalysed reaction is carbamoyl phosphate + L-aspartate = N-carbamoyl-L-aspartate + phosphate + H(+). Its pathway is pyrimidine metabolism; UMP biosynthesis via de novo pathway; (S)-dihydroorotate from bicarbonate: step 2/3. Functionally, catalyzes the condensation of carbamoyl phosphate and aspartate to form carbamoyl aspartate and inorganic phosphate, the committed step in the de novo pyrimidine nucleotide biosynthesis pathway. The protein is Aspartate carbamoyltransferase catalytic subunit of Dinoroseobacter shibae (strain DSM 16493 / NCIMB 14021 / DFL 12).